The following is a 91-amino-acid chain: Cell division protein CrgA (91 aa).

Residues 1–24 (MPKSKITTEGSALPQSSSSATNRT) are compositionally biased toward polar residues. The interval 1-28 (MPKSKITTEGSALPQSSSSATNRTPVKI) is disordered. Helical transmembrane passes span 38–58 (IAIMLGLMLLGLLWLVVNYLA) and 68–88 (LGPWNYGIGFGLAIIGLLMTM).

The protein belongs to the CrgA family.

The protein resides in the cell membrane. Functionally, involved in cell division. The protein is Cell division protein CrgA of Corynebacterium aurimucosum (strain ATCC 700975 / DSM 44827 / CIP 107346 / CN-1) (Corynebacterium nigricans).